Reading from the N-terminus, the 1067-residue chain is [F-actin]-monooxygenase MICAL1 (1067 aa).

The tract at residues Met1–Glu489 is monooxygenase domain. FAD is bound by residues Cys95, Glu114–Arg116, Arg121–Asn123, Phe181, Tyr293, and Asp393. A Phosphothreonine modification is found at Thr475. Positions Ala508–Lys612 constitute a Calponin-homology (CH) domain. At Ser617 the chain carries Phosphoserine. Residues Ser645 to His688 are disordered. A compositionally biased stretch (basic and acidic residues) spans Arg646–Met663. The stretch at Arg646–Glu666 forms a coiled coil. Pro residues predominate over residues Glu671–Pro684. Residues Asp695–Lys757 enclose the LIM zinc-binding domain. Cys697, Cys700, His718, Cys721, Cys724, Cys727, Cys747, and His750 together coordinate Zn(2+). Residues Asp755–Glu766 are compositionally biased toward basic and acidic residues. Disordered stretches follow at residues Asp755–Ser838 and Lys867–Asp886. Over residues Pro773–Gln789 the composition is skewed to polar residues. Ser872, Ser875, and Ser876 each carry phosphoserine. Residues Ser876–Asp886 are compositionally biased toward acidic residues. Positions Gly901–Gly1067 are important for interaction with RAB8A. The bMERB domain occupies Lys918–Gly1067. Coiled-coil stretches lie at residues Glu919 to Ser962 and Asn999 to Arg1027. Residue Ser1057 is modified to Phosphoserine.

Belongs to the Mical family. Interacts with STK38 and STK38L. Interacts with RAB1B, RAB8A, RAB10, RAB13, RAB15 and RAB35 (in their GTP-bound forms); binding to RAB1B is of low affinity compared to other Rab proteins; at least in case of RAB8A and RAB10 can bind 2 molecules of the Rab proteins simultaneously; ternary complex formation of RAB8A, RAB13 and MICAL1 is possible. Associates with the SH3 domain of NEDD9. Interacts with VIM and PLXNA3. Interacts with GRAF1/ARHGAP26, GRAF2/ARHGAP10, RAB8A, RAB8B and RAB10; may bind simultaneously to GRAFs and Rabs and connects GRAFs to Rabs. Does not interact with RAB1 and RAB11A. Requires FAD as cofactor. Expressed in the thymus, lung, spleen, kidney, testis and hematopoietic cells.

The protein localises to the cytoplasm. It is found in the cytoskeleton. The protein resides in the endosome membrane. Its subcellular location is the midbody. It catalyses the reaction L-methionyl-[F-actin] + NADPH + O2 + H(+) = L-methionyl-(R)-S-oxide-[F-actin] + NADP(+) + H2O. The catalysed reaction is NADPH + O2 + H(+) = H2O2 + NADP(+). In terms of biological role, monooxygenase that promotes depolymerization of F-actin by mediating oxidation of specific methionine residues on actin to form methionine-sulfoxide, resulting in actin filament disassembly and preventing repolymerization. In the absence of actin, it also functions as a NADPH oxidase producing H(2)O(2). Acts as a cytoskeletal regulator that connects NEDD9 to intermediate filaments. Also acts as a negative regulator of apoptosis via its interaction with STK38 and STK38L; acts by antagonizing STK38 and STK38L activation by MST1/STK4. Involved in regulation of lamina-specific connectivity in the nervous system such as the development of lamina-restricted hippocampal connections. Through redox regulation of the actin cytoskeleton controls the intracellular distribution of secretory vesicles containing L1/neurofascin/NgCAM family proteins in neurons, thereby regulating their cell surface levels. May act as Rab effector protein and play a role in vesicle trafficking. Promotes endosomal tubule extension by associating with RAB8 (RAB8A or RAB8B), RAB10 and GRAF (GRAF1/ARHGAP26 or GRAF2/ARHGAP10) on the endosomal membrane which may connect GRAFs to Rabs, thereby participating in neosynthesized Rab8-Rab10-Rab11-dependent protein export. The protein is [F-actin]-monooxygenase MICAL1 (MICAL1) of Homo sapiens (Human).